Consider the following 451-residue polypeptide: Photosystem II CP43 reaction center protein (451 aa).

Topologically, residues 1 to 46 are cytoplasmic; the sequence is ATNRDQESSGFAWWAGNARLINLSGKLLGAHVAHAGLIVFWAGAMT. Positions 13, 27, and 30 each coordinate chlorophyll a. Residues 47–71 form a helical membrane-spanning segment; it reads LFELAHFIPEKPMYEQGLILIPHIA. The Lumenal portion of the chain corresponds to 72-111; that stretch reads TLGWGVGPGGEVVDTFPFFVVGVVHLISSAVLGFGGVYHA. Chlorophyll a is bound by residues V92 and G106. Residues 112 to 133 form a helical membrane-spanning segment; that stretch reads IRGPETLEEYSSFFGYDWKDKN. At 134 to 155 the chain is on the cytoplasmic side; sequence KMTTILGFHLIVLGIGALLLVA. Residue I138 participates in chlorophyll a binding. The chain crosses the membrane as a helical span at residues 156 to 178; it reads KAMFFGGLYDTWAPGGGDVRVIT. Residues 179-232 lie on the Lumenal side of the membrane; it reads NPTLDPRVIFGYLLKSPFGGEGWIVSVNNLEDVVGGHIWIGLICIAGGIWHILT. Residues V211 and G225 each coordinate chlorophyll a. Residues 233–253 traverse the membrane as a helical segment; the sequence is TPFGWARRAFIWSGEAYLSYS. At 254–268 the chain is on the cytoplasmic side; the sequence is LGALSMMGFIATCFV. A helical transmembrane segment spans residues 269–290; the sequence is WFNNTVYPSEFYGPTGPEASQA. Residues 291-424 are Lumenal-facing; sequence QAMTFLIRDQ…FLVGHLWHAG (134 aa). E345 is a [CaMn4O5] cluster binding site. 3 residues coordinate chlorophyll a: L404, F415, and G418. The helical transmembrane segment at 425–449 threads the bilayer; sequence RARAAAAGFEKGIDRESEPVLSMPS. The Cytoplasmic portion of the chain corresponds to 450–451; the sequence is LD.

The protein belongs to the PsbB/PsbC family. PsbC subfamily. PSII is composed of 1 copy each of membrane proteins PsbA, PsbB, PsbC, PsbD, PsbE, PsbF, PsbH, PsbI, PsbJ, PsbK, PsbL, PsbM, PsbT, PsbX, PsbY, PsbZ, Psb30/Ycf12, peripheral proteins PsbO, CyanoQ (PsbQ), PsbU, PsbV and a large number of cofactors. It forms dimeric complexes. Binds multiple chlorophylls and provides some of the ligands for the Ca-4Mn-5O cluster of the oxygen-evolving complex. It may also provide a ligand for a Cl- that is required for oxygen evolution. PSII binds additional chlorophylls, carotenoids and specific lipids. is required as a cofactor.

The protein resides in the cellular thylakoid membrane. One of the components of the core complex of photosystem II (PSII). It binds chlorophyll and helps catalyze the primary light-induced photochemical processes of PSII. PSII is a light-driven water:plastoquinone oxidoreductase, using light energy to abstract electrons from H(2)O, generating O(2) and a proton gradient subsequently used for ATP formation. This chain is Photosystem II CP43 reaction center protein, found in Thermostichus vulcanus (Synechococcus vulcanus).